A 201-amino-acid chain; its full sequence is Beta-lactamase inhibitory protein (201 aa).

A signal peptide spans 1–36 (MRTVGIGAGVRRLGRAVVMAAAVGGLVLGSAGASNA). Tandem repeats lie at residues 37 to 112 (AGVM…EKLL) and 116 to 201 (APTL…WDLV). Cystine bridges form between Cys66–Cys78 and Cys145–Cys167.

As to quaternary structure, interacts with E.coli beta-lactamase TEM-1; interaction inhibits hydrolysis of beta-lactam antibiotics. Interacts with K.pneumoniae beta-lactamase SHV-1. Interacts with K.pneumoniae beta-lactamases KPC-2 and KPC-3; interaction inhibits hydrolysis of beta-lactam antibiotics. Interacts with E.coli beta-lactamases CTX-M-14 and CTX-M-15; interaction inhibits hydrolysis of beta-lactam antibiotics.

Its subcellular location is the secreted. Functionally, inhibits a wide variety of beta lactamases. The sequence is that of Beta-lactamase inhibitory protein from Streptomyces clavuligerus.